Consider the following 201-residue polypeptide: IMP cyclohydrolase (201 aa).

The protein belongs to the archaeal IMP cyclohydrolase family.

It carries out the reaction IMP + H2O = 5-formamido-1-(5-phospho-D-ribosyl)imidazole-4-carboxamide. It participates in purine metabolism; IMP biosynthesis via de novo pathway; IMP from 5-formamido-1-(5-phospho-D-ribosyl)imidazole-4-carboxamide: step 1/1. Its function is as follows. Catalyzes the cyclization of 5-formylamidoimidazole-4-carboxamide ribonucleotide to IMP. The protein is IMP cyclohydrolase of Methanocella arvoryzae (strain DSM 22066 / NBRC 105507 / MRE50).